Consider the following 354-residue polypeptide: Erythroferrone (354 aa).

Residues 1 to 28 (MAPARRPAGARLLLVYAGLLAAAAAGLG) form the signal peptide. 2 stretches are compositionally biased toward low complexity: residues 26-37 (GLGSPEPGAPSR) and 51-62 (PRGPGESRAGPA). Positions 26-123 (GLGSPEPGAP…PGPPGPQGPP (98 aa)) are disordered. The segment covering 69-80 (TAERAHSVDPRD) has biased composition (basic and acidic residues). Residues 94-107 (NGKKRSRGKAKKLK) show a composition bias toward basic residues. Proline 111, proline 113, proline 114, proline 116, proline 117, and proline 119 each carry hydroxyproline. Residues 111 to 123 (PGPPGPPGPQGPP) are compositionally biased toward pro residues. The C1q domain maps to 199–354 (APRVEAAFLC…SHFSAVLLGV (156 aa)). N-linked (GlcNAc...) asparagine glycans are attached at residues asparagine 243, asparagine 295, and asparagine 333.

Belongs to the adipolin/erythroferrone family. In terms of assembly, homodimer; disulfide-linked. Forms trimer, hexamers and higher molecular weight oligomers. May form heteromeric complexes with C1QTNF2 and C1QTNF12 and, to a lesser extent, with C1QTNF5 and C1QTNF10. Interacts with BMP5 and BMP7; the interaction inhibits BMP-induced transcription of HAMP. Interacts with BMP6; the interaction inhibits BMP-induced transcription of HAMP. Interacts with BMP2. Interacts with heterodimers composed of BMP2 and BMP6 in vitro, the interaction inhibits the heterodimer binding to its receptor BMPR1A /ALK3 and thereby suppresses expression of HAMP. In terms of processing, N-glycosylated; required for secretion of the mature protein.

It localises to the secreted. Iron-regulatory hormone that acts as an erythroid regulator after hemorrhage: produced by erythroblasts following blood loss and mediates suppression of hepcidin (HAMP) expression in the liver, thereby promoting increased iron absorption and mobilization from stores. Promotes lipid uptake into adipocytes and hepatocytes via transcriptional up-regulation of genes involved in fatty acid uptake. Inhibits apoptosis and inflammatory response in cardiomyocytes via promotion of sphingosine-1-phosphate (S1P) and cAMP-dependent activation of AKT signaling. Inhibits autophagy induced by nutrient deficiency in hepatocytes via promoting the phosphorylation of IRS1, AKT, and MTOR, and thereby subsequent activation of the AKT-MTOR signaling pathway. Negatively regulates the differentiation of osteoblasts, potentially via sequestering BMP2, and thereby inhibits the activation of SMAD signaling. The reduction in BMP2 signaling in osteoblasts also results in an increase in expression of the osteoclastogenesis-promoting factors TNFSF11/RANKL and SOST, thereby indirectly promotes bone resorption. This Homo sapiens (Human) protein is Erythroferrone.